The following is a 75-amino-acid chain: Large ribosomal subunit protein uL24c (75 aa).

It belongs to the universal ribosomal protein uL24 family. In terms of assembly, part of the 50S ribosomal subunit.

Its subcellular location is the plastid. It localises to the chloroplast. One of two assembly initiator proteins, it binds directly to the 5'-end of the 23S rRNA, where it nucleates assembly of the 50S subunit. The protein is Large ribosomal subunit protein uL24c (rpl24) of Cyanidioschyzon merolae (strain NIES-3377 / 10D) (Unicellular red alga).